The following is an 855-amino-acid chain: Photoactivated adenylate cyclase subunit beta-like protein 1224-5/9F (855 aa).

Residues 56-149 form the BLUF 1 domain; sequence LRRLMYLSKG…GRMSGVWHMK (94 aa). A disordered region spans residues 420–444; the sequence is RPPIFDDTPKCNPRPRTPGCEGRQR. Positions 471-563 constitute a BLUF 2 domain; sequence VPTLTYISHA…RVYPSEWTLT (93 aa). The segment covering 813-827 has biased composition (basic and acidic residues); sequence RSGEKPLTEPEEAKL. The interval 813–855 is disordered; that stretch reads RSGEKPLTEPEEAKLDFSPGRVRHGDSGRRSNSAQGKLSIQVR. Residues 842 to 855 show a composition bias toward polar residues; that stretch reads RSNSAQGKLSIQVR.

As to quaternary structure, heterotetramer of two alpha and two beta subunits.

It is found in the cell projection. The protein localises to the cilium. The protein resides in the flagellum. The chain is Photoactivated adenylate cyclase subunit beta-like protein 1224-5/9F from Euglena gracilis.